The following is a 205-amino-acid chain: Large ribosomal subunit protein uL4 (205 aa).

Residues 48–79 (KAQKSRSDVSGGGKKPWKQKGSGHARAGTTRS) are disordered.

Belongs to the universal ribosomal protein uL4 family. In terms of assembly, part of the 50S ribosomal subunit.

In terms of biological role, one of the primary rRNA binding proteins, this protein initially binds near the 5'-end of the 23S rRNA. It is important during the early stages of 50S assembly. It makes multiple contacts with different domains of the 23S rRNA in the assembled 50S subunit and ribosome. Forms part of the polypeptide exit tunnel. The protein is Large ribosomal subunit protein uL4 of Methylococcus capsulatus (strain ATCC 33009 / NCIMB 11132 / Bath).